Reading from the N-terminus, the 123-residue chain is Small ribosomal subunit protein uS13 (123 aa).

A disordered region spans residues 95–123 (GLPVRGQRTKTNARTRKGPARTVAGKKKK).

This sequence belongs to the universal ribosomal protein uS13 family. In terms of assembly, part of the 30S ribosomal subunit. Forms a loose heterodimer with protein S19. Forms two bridges to the 50S subunit in the 70S ribosome.

Its function is as follows. Located at the top of the head of the 30S subunit, it contacts several helices of the 16S rRNA. In the 70S ribosome it contacts the 23S rRNA (bridge B1a) and protein L5 of the 50S subunit (bridge B1b), connecting the 2 subunits; these bridges are implicated in subunit movement. Contacts the tRNAs in the A and P-sites. The polypeptide is Small ribosomal subunit protein uS13 (Heliobacterium modesticaldum (strain ATCC 51547 / Ice1)).